Consider the following 484-residue polypeptide: Neuronal acetylcholine receptor subunit alpha-9 (484 aa).

The first 27 residues, 1–27, serve as a signal peptide directing secretion; it reads MKRNNLSSFYVSLWLLFTATMLQAVES. Residues 28–240 lie on the Extracellular side of the membrane; that stretch reads AKGKYAQMLF…FTLILKRKSS (213 aa). A glycan (N-linked (GlcNAc...) asparagine) is linked at asparagine 59. A disulfide bond links cysteine 157 and cysteine 171. Residue asparagine 172 is glycosylated (N-linked (GlcNAc...) asparagine). Na(+) contacts are provided by serine 193 and aspartate 195. Cysteines 221 and 222 form a disulfide. 3 helical membrane-spanning segments follow: residues 241 to 261, 271 to 291, and 305 to 325; these read FYIFNLLLPCILISFLAPLGF, VSLGVTVLLALTVFQLMVAEI, and YIATMTMITASTALTIIIMNV. The Cytoplasmic portion of the chain corresponds to 326-462; that stretch reads HHCGSEAKPV…WKKVAKVMDR (137 aa). Positions 364-395 are disordered; that stretch reads RREKEQEHRLEGGDMCRGGDGKSHLSSRNDDS. The helical transmembrane segment at 463–483 threads the bilayer; the sequence is FFMWIFFIMVFFMSVLIIGKA.

This sequence belongs to the ligand-gated ion channel (TC 1.A.9) family. Acetylcholine receptor (TC 1.A.9.1) subfamily. Alpha-9/CHRNA9 sub-subfamily. Forms homo- or heteropentameric channels in conjunction with CHRNA10. The native outer hair cell receptor is composed of CHRNA9:CHRNA10 heterooligomers. Found in the stoichiometric form (CHRNA9)2:(CHRNA10)3. In terms of tissue distribution, expressed in hair cells of the cochlea (at protein level). Expressed in hair cells of the cochlea.

The protein localises to the synaptic cell membrane. It localises to the cell membrane. The enzyme catalyses Ca(2+)(in) = Ca(2+)(out). It carries out the reaction K(+)(in) = K(+)(out). It catalyses the reaction Na(+)(in) = Na(+)(out). The catalysed reaction is Mg(2+)(in) = Mg(2+)(out). With respect to regulation, activated by a myriad of ligands such as acetylcholine. AChR activity is inhibited by the antagonist alpha-conotoxins RgIA and GeXXA, small disulfide-constrained peptides from cone snails. Its function is as follows. Component of neuronal acetylcholine receptors (nAChRs) that function as pentameric, ligand-gated cation channels with high calcium permeability among other activities. nAChRs are excitatory neurotrasnmitter receptors formed by a collection of nAChR subunits known to mediate synaptic transmission in the nervous system and the neuromuscular junction. Each nAchR subunit confers differential attributes to channel properties, including activation, deactivation and desensitization kinetics, pH sensitivity, cation permeability, and binding to allosteric modulators. Forms either homopentamers or heteropentamers with CHRNA10. Expressed in the inner ear, in sympathetic neurons and in other non-neuronal cells, such as skin keratinocytes and lymphocytes. The channel is permeable to a range of divalent cations including calcium, the influx of which may activate a potassium current which hyperpolarizes the cell membrane. The chain is Neuronal acetylcholine receptor subunit alpha-9 (CHRNA9) from Gallus gallus (Chicken).